The sequence spans 659 residues: Pseudouridylate synthase 7 homolog (659 aa).

An N-acetylmethionine modification is found at Met-1. Composition is skewed to polar residues over residues 1 to 10 (MEMTEMTSVS) and 39 to 54 (CPTTGQDGIENSSLPS). Residues 1–99 (MEMTEMTSVS…EEEEEEAESF (99 aa)) form a disordered region. Ser-10 is modified (phosphoserine). Acidic residues predominate over residues 75-98 (PSEEEEEEDGLSEEEEEEEEEAES). Ser-125 carries the post-translational modification Phosphoserine. The active-site Nucleophile is Asp-292. Residues 368 to 578 (GFINYYGMQR…SGAYRKIIIR (211 aa)) enclose the TRUD domain.

The protein belongs to the pseudouridine synthase TruD family. As to quaternary structure, interacts with SIRT1.

It localises to the nucleus. It carries out the reaction a uridine in tRNA = a pseudouridine in tRNA. The catalysed reaction is uridine(13) in tRNA = pseudouridine(13) in tRNA. The enzyme catalyses a uridine in mRNA = a pseudouridine in mRNA. Functionally, pseudouridylate synthase that catalyzes pseudouridylation of RNAs. Acts as a regulator of protein synthesis in embryonic stem cells by mediating pseudouridylation of RNA fragments derived from tRNAs (tRFs): pseudouridylated tRFs inhibit translation by targeting the translation initiation complex. Also catalyzes pseudouridylation of mRNAs: mediates pseudouridylation of mRNAs with the consensus sequence 5'-UGUAG-3'. Acts as a regulator of pre-mRNA splicing by mediating pseudouridylation of pre-mRNAs at locations associated with alternatively spliced regions. Pseudouridylation of pre-mRNAs near splice sites directly regulates mRNA splicing and mRNA 3'-end processing. In addition to mRNAs and tRNAs, binds other types of RNAs, such as snRNAs, Y RNAs and vault RNAs, suggesting that it can catalyze pseudouridylation of many RNA types. In Bos taurus (Bovine), this protein is Pseudouridylate synthase 7 homolog.